Consider the following 607-residue polypeptide: Threonine--tRNA ligase (607 aa).

Positions 1-143 are editing domain; the sequence is MRVLYIHAER…SFKPEEARVA (143 aa). Catalytic regions lie at residues 193–489 and 194–489; these read PRYL…PRLP and RYLD…PRLP. Cysteine 286, histidine 337, and histidine 458 together coordinate Zn(2+).

It belongs to the class-II aminoacyl-tRNA synthetase family. As to quaternary structure, homodimer. Requires Zn(2+) as cofactor.

It is found in the cytoplasm. The enzyme catalyses tRNA(Thr) + L-threonine + ATP = L-threonyl-tRNA(Thr) + AMP + diphosphate + H(+). Functionally, catalyzes the attachment of threonine to tRNA(Thr) in a two-step reaction: L-threonine is first activated by ATP to form Thr-AMP and then transferred to the acceptor end of tRNA(Thr). Also edits incorrectly charged L-seryl-tRNA(Thr). The chain is Threonine--tRNA ligase from Pyrobaculum calidifontis (strain DSM 21063 / JCM 11548 / VA1).